The chain runs to 264 residues: Transcription initiation factor TFIID subunit 9 (264 aa).

K5 bears the N6-acetyllysine mark. Phosphoserine is present on residues S149, S152, S155, and S158. The tract at residues 150-174 (VGSVSSRPSTPTLGTPTPQAMSVST) is disordered. Over residues 151–174 (GSVSSRPSTPTLGTPTPQAMSVST) the composition is skewed to polar residues. Residues T159, T161, T164, and T178 each carry the phosphothreonine modification. Phosphoserine is present on residues S181 and S196. Residues 233–264 (QNTANESANALKRKREEEDDDDDDDDDDYDNL) are disordered. Acidic residues predominate over residues 249-264 (EEDDDDDDDDDDYDNL).

Belongs to the TAF9 family. In terms of assembly, component of the TFIID basal transcription factor complex, composed of TATA-box-binding protein TBP, and a number of TBP-associated factors (TAFs), including TAF1, TAF2, TAF3, TAF4, TAF5, TAF6, TAF7, TAF8, TAF9, TAF10, TAF11, TAF12 and TAF13. Component of the TATA-binding protein-free TAF complex (TFTC), the PCAF histone acetylase complex and the STAGA transcription coactivator-HAT complex. The PCAF complex consists at least of TADA2L/ADA2, SUPT3H/SPT3, TADA3L/ADA3, TAF5L/PAF65-beta, TAF6L/PAF65-alpha, TAF10/TAFII30, TAF12/TAFII20, TAF9/TAFII31 and TRRAP. The STAGA transcription coactivator-HAT complex consists at least of SUPT3H, GCN5L2, SUPT7L, TAF5L, TAF6L, TADA3L, TAD1L, TAF10, TAF12, TRRAP and TAF9. Binds N-terminal domain of p53/TP53 which is essential for transcription. Component of some MLL1/MLL complex, at least composed of the core components KMT2A/MLL1, ASH2L, HCFC1/HCF1, WDR5 and RBBP5, as well as the facultative components BACC1, CHD8, E2F6, HSP70, INO80C, KANSL1, LAS1L, MAX, MCRS1, MGA, MYST1/MOF, PELP1, PHF20, PRP31, RING2, RUVB1/TIP49A, RUVB2/TIP49B, SENP3, TAF1, TAF4, TAF6, TAF7, TAF9 and TEX10. Binds TFIIB and the Herpes simplex virus activator VP16. Forms a heterodimer with TAF6 in a complex with the TAF4B-TAF12 heterodimer. Also interacts with TAF5. Binds directly DNA. Increased DNA binding when complexed with TAF6.

The protein localises to the nucleus. The TFIID basal transcription factor complex plays a major role in the initiation of RNA polymerase II (Pol II)-dependent transcription. TFIID recognizes and binds promoters with or without a TATA box via its subunit TBP, a TATA-box-binding protein, and promotes assembly of the pre-initiation complex (PIC). The TFIID complex consists of TBP and TBP-associated factors (TAFs), including TAF1, TAF2, TAF3, TAF4, TAF5, TAF6, TAF7, TAF8, TAF9, TAF10, TAF11, TAF12 and TAF13. TAF9 is also a component of the TBP-free TAFII complex (TFTC), the PCAF histone acetylase complex and the STAGA transcription coactivator-HAT complex. TAF9 and its paralog TAF9B are involved in transcriptional activation as well as repression of distinct but overlapping sets of genes. Essential for cell viability. May have a role in gene regulation associated with apoptosis. This is Transcription initiation factor TFIID subunit 9 from Rattus norvegicus (Rat).